A 570-amino-acid polypeptide reads, in one-letter code: FERM domain-containing protein 5 (570 aa).

The 282-residue stretch at Tyr-17 to Lys-298 folds into the FERM domain. The segment at Ser-308–Pro-353 is interaction with ROCK1. Positions Ala-344–Thr-367 are disordered. A Phosphoserine modification is found at Ser-375. The tract at residues Asp-385 to Ser-407 is disordered. Polar residues predominate over residues His-388–Gly-398. The chain crosses the membrane as a helical span at residues Leu-504–Glu-524.

Interacts with CTNND1. Interacts with ITGB5 (via cytoplasmic domain) and ROCK1.

Its subcellular location is the membrane. It localises to the cell junction. The protein localises to the adherens junction. Its function is as follows. May be involved in regulation of cell migration. May regulate cell-matrix interactions via its interaction with ITGB5 and modifying ITGB5 cytoplasmic tail interactions such as with FERMT2 and TLN1. May regulate ROCK1 kinase activity possibly involved in regulation of actin stress fiber formation. The protein is FERM domain-containing protein 5 (FRMD5) of Homo sapiens (Human).